Reading from the N-terminus, the 124-residue chain is V-type proton ATPase subunit F 1 (124 aa).

The protein belongs to the V-ATPase F subunit family. As to quaternary structure, V-ATPase is a heteromultimeric enzyme made up of two complexes: the ATP-hydrolytic V1 complex and the proton translocation V0 complex. The V1 complex consists of three catalytic AB heterodimers that form a heterohexamer, three peripheral stalks each consisting of EG heterodimers, one central rotor including subunits D and F, and the regulatory subunits C and H. The proton translocation complex V0 consists of the proton transport subunit a, a ring of proteolipid subunits c9c'', rotary subunit d, subunits e and f, and the accessory subunits VhaAC45 and ATP6AP2.

In terms of biological role, subunit of the V1 complex of vacuolar(H+)-ATPase (V-ATPase), a multisubunit enzyme composed of a peripheral complex (V1) that hydrolyzes ATP and a membrane integral complex (V0) that translocates protons. V-ATPase is responsible for acidifying and maintaining the pH of intracellular compartments and in some cell types, is targeted to the plasma membrane, where it is responsible for acidifying the extracellular environment. This chain is V-type proton ATPase subunit F 1 (Vha14), found in Drosophila pseudoobscura pseudoobscura (Fruit fly).